A 375-amino-acid chain; its full sequence is Delta(12) fatty acid dehydrogenase (375 aa).

2 helical membrane-spanning segments follow: residues 54–74 (IIAYIFYFLADKYIPILPAPL) and 77–97 (LAWPLYWFCQASILTGLWVIG). The Histidine box-1 signature appears at 98 to 102 (HECGH). A helical membrane pass occupies residues 110-130 (WVDDTVGFILHSFLMTPYFSW). Residues 134-138 (HRNHH) carry the Histidine box-2 motif. 3 consecutive transmembrane segments (helical) span residues 172-192 (LLIMFITFTLGFPLYLFTNIS), 218-238 (VLLSDLGLLAVLYGVKLAVAA), and 242-262 (AWVTCIYGIPVLGVFIFFDII). Positions 308-312 (HVMHH) match the Histidine box-3 motif.

The protein belongs to the fatty acid desaturase type 1 family. Fe cation serves as cofactor. In terms of tissue distribution, seed.

It is found in the membrane. It carries out the reaction a (9Z,12Z)-octadecadienoyl-containing glycerolipid + 2 Fe(II)-[cytochrome b5] + O2 + 2 H(+) = a (9Z)-octadec-9-en-12-ynoyl-containing glycerolipid + 2 Fe(III)-[cytochrome b5] + 2 H2O. The protein operates within lipid metabolism; polyunsaturated fatty acid biosynthesis. In terms of biological role, changes the delta-12 double bond of linoleic acid into a triple bond in the biosynthesis of crepenynic acid. The chain is Delta(12) fatty acid dehydrogenase from Crepis alpina (Hawksbeard).